The chain runs to 749 residues: DNA topoisomerase 1 (749 aa).

The disordered stretch occupies residues 1-110; it reads MSDSEDVALS…PKKEDSVETD (110 aa). Residues 62-75 are compositionally biased toward basic and acidic residues; the sequence is LSKEKVNNKVKDEL. The span at 79–94 shows a compositional bias: low complexity; the sequence is PVTPKKTPKISKTPVS. The segment covering 101 to 110 has biased composition (basic and acidic residues); it reads PKKEDSVETD. Interaction with DNA stretches follow at residues 338–339, 401–406, and 493–495; these read KY, RAGGEK, and TAK. A Topo IB-type catalytic domain is found at 345–749; the sequence is NSSIKGISDM…IESTDENWRF (405 aa). The active-site O-(3'-phospho-DNA)-tyrosine intermediate is tyrosine 707.

It belongs to the type IB topoisomerase family.

The protein localises to the nucleus. It is found in the nucleolus. Its subcellular location is the nucleoplasm. It carries out the reaction ATP-independent breakage of single-stranded DNA, followed by passage and rejoining.. Functionally, releases the supercoiling and torsional tension of DNA introduced during the DNA replication and transcription by transiently cleaving and rejoining one strand of the DNA duplex. Introduces a single-strand break via transesterification at the specific target site 5'-[CT]CCTTp site in duplex DNA. The scissile phosphodiester is attacked by the catalytic tyrosine of the enzyme, resulting in the formation of a DNA-(3'-phosphotyrosyl)-enzyme intermediate and the expulsion of a 5'-OH DNA strand. The free DNA strand then undergoes passage around the unbroken strand thus removing DNA supercoils. Finally, in the religation step, the DNA 5'-OH attacks the covalent intermediate to expel the active-site tyrosine and restore the DNA phosphodiester backbone. This is DNA topoisomerase 1 (TOP1) from Candidozyma auris (Yeast).